Reading from the N-terminus, the 860-residue chain is Transcription factor E2F8 (860 aa).

Positions 1-114 (MENQKENLFS…NEKSQPSRKE (114 aa)) are disordered. Residue Ser-71 is modified to Phosphoserine. Composition is skewed to basic and acidic residues over residues 74–84 (IRSRDQKRGLS) and 92–114 (EARDCLHEPQAKTNEKSQPSRKE). DNA-binding regions lie at residues 112–181 (RKEK…TWHG) and 261–347 (RKDK…KWTG). Disordered stretches follow at residues 407-433 (RRKISSAPSSPVKSSKAESSQNSPPVP) and 533-616 (TPPH…PKED). Residues 411 to 426 (SSAPSSPVKSSKAESS) are compositionally biased toward low complexity. Phosphoserine is present on residues Ser-412 and Ser-416. The span at 542–554 (VCPTQSSNATGSK) shows a compositional bias: polar residues. 2 stretches are compositionally biased toward basic and acidic residues: residues 555-565 (DPTDAPTEKTA) and 586-596 (RSKETTGDRGT).

Belongs to the E2F/DP family. In terms of assembly, homodimer and heterodimer: mainly forms homodimers and, to a lesser extent, heterodimers with E2F8. Dimerization is important for DNA-binding. Interacts with HIF1A.

It localises to the nucleus. Its function is as follows. Atypical E2F transcription factor that participates in various processes such as angiogenesis and polyploidization of specialized cells. Mainly acts as a transcription repressor that binds DNA independently of DP proteins and specifically recognizes the E2 recognition site 5'-TTTC[CG]CGC-3'. Directly represses transcription of classical E2F transcription factors such as E2F1: component of a feedback loop in S phase by repressing the expression of E2F1, thereby preventing p53/TP53-dependent apoptosis. Plays a key role in polyploidization of cells in placenta and liver by regulating the endocycle, probably by repressing genes promoting cytokinesis and antagonizing action of classical E2F proteins (E2F1, E2F2 and/or E2F3). Required for placental development by promoting polyploidization of trophoblast giant cells. Acts as a promoter of sprouting angiogenesis, possibly by acting as a transcription activator: associates with HIF1A, recognizes and binds the VEGFA promoter, which is different from canonical E2 recognition site, and activates expression of the VEGFA gene. The sequence is that of Transcription factor E2F8 (E2f8) from Rattus norvegicus (Rat).